The following is a 333-amino-acid chain: Photosystem II assembly lipoprotein Ycf48 (333 aa).

The signal sequence occupies residues 1–23 (MNRLLSSAVNLLLVLVLGVGLSG). Cys24 carries the N-palmitoyl cysteine lipid modification. Cys24 carries the S-diacylglycerol cysteine lipid modification.

The protein belongs to the Ycf48 family. Part of early PSII assembly complexes which includes D1 (psbA) and PsbI; not found in mature PSII. Binds to the lumenal side of PSII complexes. Interacts with YidC.

It localises to the cellular thylakoid membrane. Its function is as follows. A factor required for optimal assembly of photosystem II (PSII), acting in the early stages of PSII assembly. Also plays a role in replacement of photodamaged D1 (psbA). Assists YidC in synthesis of chlorophyll-binding proteins. This is Photosystem II assembly lipoprotein Ycf48 from Synechococcus sp. (strain CC9902).